Reading from the N-terminus, the 422-residue chain is UDP-N-acetylglucosamine 1-carboxyvinyltransferase (422 aa).

22-23 (KN) serves as a coordination point for phosphoenolpyruvate. R93 contributes to the UDP-N-acetyl-alpha-D-glucosamine binding site. C117 functions as the Proton donor in the catalytic mechanism. The residue at position 117 (C117) is a 2-(S-cysteinyl)pyruvic acid O-phosphothioketal. UDP-N-acetyl-alpha-D-glucosamine-binding positions include 122–126 (RPVDQ), D305, and I327.

Belongs to the EPSP synthase family. MurA subfamily.

It localises to the cytoplasm. It carries out the reaction phosphoenolpyruvate + UDP-N-acetyl-alpha-D-glucosamine = UDP-N-acetyl-3-O-(1-carboxyvinyl)-alpha-D-glucosamine + phosphate. It participates in cell wall biogenesis; peptidoglycan biosynthesis. Its function is as follows. Cell wall formation. Adds enolpyruvyl to UDP-N-acetylglucosamine. The sequence is that of UDP-N-acetylglucosamine 1-carboxyvinyltransferase from Bordetella petrii (strain ATCC BAA-461 / DSM 12804 / CCUG 43448).